A 452-amino-acid chain; its full sequence is Bone morphogenetic protein 5 (452 aa).

The signal sequence occupies residues Met1 to Ala25. Residues Lys26–Arg314 constitute a propeptide that is removed on maturation. N-linked (GlcNAc...) asparagine glycans are attached at residues Asn209, Asn325, Asn343, and Asn393. The disordered stretch occupies residues Ala316–Ser345. Disulfide bonds link Cys351/Cys417, Cys380/Cys449, and Cys384/Cys451.

The protein belongs to the TGF-beta family. Interacts with ERFE; the interaction inhibits BMP-induced transcription of HAMP.

It is found in the secreted. Growth factor of the TGF-beta superfamily that plays essential roles in many developmental processes, including cartilage and bone formation or neurogenesis. Initiates the canonical BMP signaling cascade by associating with type I receptor BMPR1A and type II receptor BMPR2. In turn, BMPR1A propagates signal by phosphorylating SMAD1/5/8 that travel to the nucleus and act as activators and repressors of transcription of target genes. Can also signal through non-canonical pathway such as MAPK p38 signaling cascade to promote chondrogenic differentiation. Promotes the expression of HAMP, this is repressed by its interaction with ERFE. This chain is Bone morphogenetic protein 5 (Bmp5), found in Mus musculus (Mouse).